The following is a 73-amino-acid chain: Putative membrane protein insertion efficiency factor (73 aa).

The protein belongs to the UPF0161 family.

It is found in the cell inner membrane. Its function is as follows. Could be involved in insertion of integral membrane proteins into the membrane. This is Putative membrane protein insertion efficiency factor from Bacteroides fragilis (strain ATCC 25285 / DSM 2151 / CCUG 4856 / JCM 11019 / LMG 10263 / NCTC 9343 / Onslow / VPI 2553 / EN-2).